The following is a 528-amino-acid chain: Peptide chain release factor 3 (528 aa).

Residues 9–280 form the tr-type G domain; sequence RRRRTFAIIS…LKLAPAPAPR (272 aa). GTP contacts are provided by residues 18 to 25, 86 to 90, and 140 to 143; these read SHPDAGKT, DTPGH, and NKLD.

The protein belongs to the TRAFAC class translation factor GTPase superfamily. Classic translation factor GTPase family. PrfC subfamily.

The protein resides in the cytoplasm. Functionally, increases the formation of ribosomal termination complexes and stimulates activities of RF-1 and RF-2. It binds guanine nucleotides and has strong preference for UGA stop codons. It may interact directly with the ribosome. The stimulation of RF-1 and RF-2 is significantly reduced by GTP and GDP, but not by GMP. The polypeptide is Peptide chain release factor 3 (Symbiobacterium thermophilum (strain DSM 24528 / JCM 14929 / IAM 14863 / T)).